The sequence spans 377 residues: Homoserine O-succinyltransferase (377 aa).

Residues 45 to 356 (NAVLVCHALN…PHGHDAFLLD (312 aa)) enclose the AB hydrolase-1 domain. The active-site Nucleophile is the serine 151. A substrate-binding site is contributed by arginine 221. Catalysis depends on residues aspartate 317 and histidine 350. Aspartate 351 provides a ligand contact to substrate.

This sequence belongs to the AB hydrolase superfamily. MetX family. In terms of assembly, homodimer.

The protein localises to the cytoplasm. It catalyses the reaction L-homoserine + succinyl-CoA = O-succinyl-L-homoserine + CoA. It participates in amino-acid biosynthesis; L-methionine biosynthesis via de novo pathway; O-succinyl-L-homoserine from L-homoserine: step 1/1. Transfers a succinyl group from succinyl-CoA to L-homoserine, forming succinyl-L-homoserine. The polypeptide is Homoserine O-succinyltransferase (Leptothrix cholodnii (strain ATCC 51168 / LMG 8142 / SP-6) (Leptothrix discophora (strain SP-6))).